The sequence spans 1217 residues: Endonuclease YhcR (1217 aa).

Residues 1 to 46 form the signal peptide; the sequence is MLSVEMISRQNRCHYVYKGGNMMRRILHIVLITALMFLNVMYTFEA. The region spanning 376 to 517 is the TNase-like domain; the sequence is GEYEGIVDRV…KKDQKGIWNE (142 aa). Catalysis depends on residues Arg404, Glu412, and Arg460. Positions 590 to 828 are phosphoesterase; sequence LRILSMNDLH…VIFAAHNHQV (239 aa). Asp597, His599, Asp647, Asn680, His792, and His824 together coordinate a divalent metal cation. Residues 829 to 1085 are 5'-nucleotidase; the sequence is VNGEVNGKLI…AYTKEGRIKL (257 aa). Substrate-binding positions include Phe965 and 1035 to 1042; that span reads FMATATGA. The disordered stretch occupies residues 1087-1142; the sequence is EASDIEDPVTEDPITEEPGDDPGTEDPIKEDPRPGEDLPDIKETPGTAPVHQLPPS. The span at 1089–1110 shows a compositional bias: acidic residues; the sequence is SDIEDPVTEDPITEEPGDDPGT. Residues 1112–1129 show a composition bias toward basic and acidic residues; that stretch reads DPIKEDPRPGEDLPDIKE. Residues 1182–1186 carry the LPXTG sorting signal motif; that stretch reads LPDTS. Thr1185 is subject to Pentaglycyl murein peptidoglycan amidated threonine. Residues 1186–1217 constitute a propeptide, removed by sortase; it reads SAGYYNFMVIGAAVTLSGTYLYVRRKRSASRT.

The protein in the C-terminal section; belongs to the 5'-nucleotidase family. Ca(2+) serves as cofactor. The cofactor is Mn(2+).

It localises to the secreted. The protein resides in the cell wall. With respect to regulation, requires a minimum of 0.1 mM of calcium for a significant activity. Maximal activity was observed with concentrations of calcium between 1 to 5 mM. Is 10-fold less active with the corresponding concentrations of manganese. Inhibited by NaCl at concentrations of 100 mM and higher. Its function is as follows. Sugar-nonspecific endonuclease that yields nucleotide 3'-monophosphate products. No 5'-nucleotidase activity was detected, using 5'-AMP as the substrate, in the presence of diverse divalent metals and with various pH values. The polypeptide is Endonuclease YhcR (yhcR) (Bacillus subtilis (strain 168)).